The chain runs to 473 residues: Photosystem II CP43 reaction center protein (473 aa).

The propeptide occupies 1-14 (MKILYSQRRFYPVE). Threonine 15 is subject to N-acetylthreonine. At threonine 15 the chain carries Phosphothreonine. The next 5 helical transmembrane spans lie at 69–93 (LFEVAHFVPEKPMYEQGLILLPHLA), 134–155 (LIGPETLEESFPFFGYVWKDKN), 178–200 (KALYFGGIYDTWAPGGGDVRKIT), 255–275 (KPFAWARRALVWSGEAYLSYS), and 291–312 (WFNNTAYPSEFYGPTGPEASQA). A [CaMn4O5] cluster-binding site is contributed by glutamate 367. The chain crosses the membrane as a helical span at residues 447–471 (RARAAAAGFEKGIDRDFEPVLSMTP).

It belongs to the PsbB/PsbC family. PsbC subfamily. PSII is composed of 1 copy each of membrane proteins PsbA, PsbB, PsbC, PsbD, PsbE, PsbF, PsbH, PsbI, PsbJ, PsbK, PsbL, PsbM, PsbT, PsbX, PsbY, PsbZ, Psb30/Ycf12, at least 3 peripheral proteins of the oxygen-evolving complex and a large number of cofactors. It forms dimeric complexes. Binds multiple chlorophylls and provides some of the ligands for the Ca-4Mn-5O cluster of the oxygen-evolving complex. It may also provide a ligand for a Cl- that is required for oxygen evolution. PSII binds additional chlorophylls, carotenoids and specific lipids. is required as a cofactor. In terms of processing, phosphorylated on threonine residue(s).

The protein resides in the plastid. Its subcellular location is the chloroplast thylakoid membrane. Functionally, one of the components of the core complex of photosystem II (PSII). It binds chlorophyll and helps catalyze the primary light-induced photochemical processes of PSII. PSII is a light-driven water:plastoquinone oxidoreductase, using light energy to abstract electrons from H(2)O, generating O(2) and a proton gradient subsequently used for ATP formation. The sequence is that of Photosystem II CP43 reaction center protein from Marchantia polymorpha (Common liverwort).